A 198-amino-acid polypeptide reads, in one-letter code: tRNA (pseudouridine(54)-N(1))-methyltransferase (198 aa).

Residues leucine 130, glycine 153, 176-181 (LSPLEL), and cysteine 186 contribute to the S-adenosyl-L-methionine site.

This sequence belongs to the methyltransferase superfamily. TrmY family. Homodimer.

It localises to the cytoplasm. It catalyses the reaction pseudouridine(54) in tRNA + S-adenosyl-L-methionine = N(1)-methylpseudouridine(54) in tRNA + S-adenosyl-L-homocysteine + H(+). In terms of biological role, specifically catalyzes the N1-methylation of pseudouridine at position 54 (Psi54) in tRNAs. In Methanococcus vannielii (strain ATCC 35089 / DSM 1224 / JCM 13029 / OCM 148 / SB), this protein is tRNA (pseudouridine(54)-N(1))-methyltransferase.